The primary structure comprises 450 residues: Putative nucleolar protein 5-3 (450 aa).

In terms of domain architecture, Nop spans 252–370; sequence IAPNLTALVG…LEARLRNLEG (119 aa). Positions 375 to 423 are disordered; it reads ACEEEEEVNDKDTKKEADDEEEPKTEECSKKRKKEAELETVEDPAKKSK. Over residues 399-423 the composition is skewed to basic and acidic residues; the sequence is TEECSKKRKKEAELETVEDPAKKSK.

Belongs to the NOP5/NOP56 family.

The protein localises to the nucleus. It localises to the nucleolus. Functionally, required for 60S ribosomal subunit biogenesis. In Arabidopsis thaliana (Mouse-ear cress), this protein is Putative nucleolar protein 5-3 (NOP5-3).